The chain runs to 136 residues: ATP synthase F(0) complex subunit C1, mitochondrial (136 aa).

Residues 1–61 constitute a mitochondrion transit peptide; the sequence is MQTAGALFIS…REFQTSVVSR (61 aa). Residues 77–97 traverse the membrane as a helical segment; the sequence is VGVAGSGAGIGTVFGSLIIGY. The residue at position 104 (Lys-104) is an N6,N6,N6-trimethyllysine. Residues 112 to 132 traverse the membrane as a helical segment; sequence ILGFALSEAMGLFCLMVAFLI.

The protein belongs to the ATPase C chain family. As to quaternary structure, homooctamer; the c-ring consists of eight c subunits forming a circle, and each subunit adopts a hairpin shape. Component of the ATP synthase complex composed at least of ATP5F1A/subunit alpha, ATP5F1B/subunit beta, ATP5MC1/subunit c (homooctomer), MT-ATP6/subunit a, MT-ATP8/subunit 8, ATP5ME/subunit e, ATP5MF/subunit f, ATP5MG/subunit g, ATP5MK/subunit k, ATP5MJ/subunit j, ATP5F1C/subunit gamma, ATP5F1D/subunit delta, ATP5F1E/subunit epsilon, ATP5PF/subunit F6, ATP5PB/subunit b, ATP5PD/subunit d, ATP5PO/subunit OSCP. ATP synthase complex consists of a soluble F(1) head domain (subunits alpha(3) and beta(3)) - the catalytic core - and a membrane F(0) domain - the membrane proton channel (subunits c, a, 8, e, f, g, k and j). These two domains are linked by a central stalk (subunits gamma, delta, and epsilon) rotating inside the F1 region and a stationary peripheral stalk (subunits F6, b, d, and OSCP). Interacts with TMEM70 (homooligomer form); this interaction facilitates the oligomer formation of subunit c/ATP5MC1 (c-ring) and the c-ring membrane insertion and also protects ATP5MC1 against intramitochondrial proteolysis. Post-translationally, trimethylated by ATPSCKMT at Lys-104. Methylation is required for proper incorporation of the C subunit into the ATP synthase complex and mitochondrial respiration.

The protein localises to the mitochondrion membrane. It carries out the reaction H(+)(in) = H(+)(out). Its function is as follows. Subunit c, of the mitochondrial membrane ATP synthase complex (F(1)F(0) ATP synthase or Complex V) that produces ATP from ADP in the presence of a proton gradient across the membrane which is generated by electron transport complexes of the respiratory chain. ATP synthase complex consist of a soluble F(1) head domain - the catalytic core - and a membrane F(1) domain - the membrane proton channel. These two domains are linked by a central stalk rotating inside the F(1) region and a stationary peripheral stalk. During catalysis, ATP synthesis in the catalytic domain of F(1) is coupled via a rotary mechanism of the central stalk subunits to proton translocation. With the subunit a (MT-ATP6), forms the proton-conducting channel in the F(0) domain, that contains two crucial half-channels (inlet and outlet) that facilitate proton movement from the mitochondrial intermembrane space (IMS) into the matrix. Protons are taken up via the inlet half-channel and released through the outlet half-channel, following a Grotthuss mechanism. The polypeptide is ATP synthase F(0) complex subunit C1, mitochondrial (Homo sapiens (Human)).